Consider the following 277-residue polypeptide: Insulin-induced gene 1 protein (277 aa).

Residues 1-84 (MPRLHDHFWS…PYPNTWHHRL (84 aa)) are Cytoplasmic-facing. Positions 51–66 (HGAPDADPAPRGRSAA) are enriched in low complexity. A disordered region spans residues 51–73 (HGAPDADPAPRGRSAAMSGPEPG). A helical membrane pass occupies residues 85–107 (LQRSLVLFSVGVVLALVLNLLQI). The Lumenal segment spans residues 108–126 (QRNVTLFPEEVIATIFSSA). A helical transmembrane segment spans residues 127-144 (WWVPPCCGTAAAVVGLLY). At 145–159 (PCIDSHLGEPHKFKR) the chain is on the cytoplasmic side. Residues K156 and K158 each participate in a glycyl lysine isopeptide (Lys-Gly) (interchain with G-Cter in ubiquitin) cross-link. A helical transmembrane segment spans residues 160–182 (EWASVMRCIAVFVGINHASAKLD). The Lumenal segment spans residues 183–185 (FAN). Residues 186 to 204 (NVQLSLTLAALSLGLWWTF) form a helical membrane-spanning segment. The Cytoplasmic segment spans residues 205 to 209 (DRSRS). A Phosphoserine; by PCK1 modification is found at S207. The chain crosses the membrane as a helical span at residues 210 to 231 (GLGLGITIAFLATLITQFLVYN). Residues 232–245 (GVYQYTSPDFLYIR) are Lumenal-facing. Residues 246–263 (SWLPCIFFSGGVTVGNIG) form a helical membrane-spanning segment. At 264-277 (RQLAMGVPEKPHSD) the chain is on the cytoplasmic side. Residues 271–277 (PEKPHSD) carry the KxHxx motif.

This sequence belongs to the INSIG family. In terms of assembly, interacts with SCAP; interaction is direct and only takes place in the presence of sterols; it prevents interaction between SCAP and the coat protein complex II (COPII). Associates with the SCAP-SREBP complex (composed of SCAP and SREBF1/SREBP1 or SREBF2/SREBP2); association is mediated via its interaction with SCAP and only takes place in the presence of sterols. Interaction with SCAP is mutually exclusive with PAQR3. Interacts with HMGCR (via its SSD); the interaction, accelerated by sterols, leads to the recruitment of HMGCR to AMFR/gp78 for its ubiquitination by the sterol-mediated ERAD pathway. Interacts with AMFR/gp78 (via its membrane domain); the interaction recruits HMCR at the ER membrane for its ubiquitination and degradation by the sterol-mediated ERAD pathway. Interacts with SOAT2/ACAT2; leading to promote recruitment of AMFR/gp78 and subsequent ubiquitination of SOAT2/ACAT2. Interacts with RNF139. Interacts with RNF145. Post-translationally, phosphorylation at Ser-207 by PCK1 reduces binding to oxysterol, disrupting the interaction between INSIG1 and SCAP, thereby promoting nuclear translocation of SREBP proteins (SREBF1/SREBP1 or SREBF2/SREBP2) and subsequent transcription of downstream lipogenesis-related genes. Ubiquitinated by AMFR/gp78 in response to sterol deprivation, leading to its degradation: when the SCAP-SREBP complex becomes dissociated from INSIG1, INSIG1 is then ubiquitinated and degraded in proteasomes. Although ubiquitination is required for rapid INSIG1 degradation, it is not required for release of the SCAP-SREBP complex. Ubiquitinated by RNF139. In terms of tissue distribution, expressed in all tissues tested with highest expression in the liver.

It localises to the endoplasmic reticulum membrane. Functionally, oxysterol-binding protein that mediates feedback control of cholesterol synthesis by controlling both endoplasmic reticulum to Golgi transport of SCAP and degradation of HMGCR. Acts as a negative regulator of cholesterol biosynthesis by mediating the retention of the SCAP-SREBP complex in the endoplasmic reticulum, thereby blocking the processing of sterol regulatory element-binding proteins (SREBPs) SREBF1/SREBP1 and SREBF2/SREBP2. Binds oxysterol, including 25-hydroxycholesterol, regulating interaction with SCAP and retention of the SCAP-SREBP complex in the endoplasmic reticulum. In presence of oxysterol, interacts with SCAP, retaining the SCAP-SREBP complex in the endoplasmic reticulum, thereby preventing SCAP from escorting SREBF1/SREBP1 and SREBF2/SREBP2 to the Golgi. Sterol deprivation or phosphorylation by PCK1 reduce oxysterol-binding, disrupting the interaction between INSIG1 and SCAP, thereby promoting Golgi transport of the SCAP-SREBP complex, followed by processing and nuclear translocation of SREBF1/SREBP1 and SREBF2/SREBP2. Also regulates cholesterol synthesis by regulating degradation of HMGCR: initiates the sterol-mediated ubiquitin-mediated endoplasmic reticulum-associated degradation (ERAD) of HMGCR via recruitment of the reductase to the ubiquitin ligases AMFR/gp78 and/or RNF139. Also regulates degradation of SOAT2/ACAT2 when the lipid levels are low: initiates the ubiquitin-mediated degradation of SOAT2/ACAT2 via recruitment of the ubiquitin ligases AMFR/gp78. The polypeptide is Insulin-induced gene 1 protein (Homo sapiens (Human)).